A 122-amino-acid chain; its full sequence is Small ribosomal subunit protein uS13 (122 aa).

Positions 93 to 122 (RRGLPVRGQRTKTNARTRKGPKKTIAGKKK) are disordered.

It belongs to the universal ribosomal protein uS13 family. As to quaternary structure, part of the 30S ribosomal subunit. Forms a loose heterodimer with protein S19. Forms two bridges to the 50S subunit in the 70S ribosome.

In terms of biological role, located at the top of the head of the 30S subunit, it contacts several helices of the 16S rRNA. In the 70S ribosome it contacts the 23S rRNA (bridge B1a) and protein L5 of the 50S subunit (bridge B1b), connecting the 2 subunits; these bridges are implicated in subunit movement. Contacts the tRNAs in the A and P-sites. The protein is Small ribosomal subunit protein uS13 of Corynebacterium kroppenstedtii (strain DSM 44385 / JCM 11950 / CIP 105744 / CCUG 35717).